Consider the following 284-residue polypeptide: MEMO1 family protein MMP1387 (284 aa).

Belongs to the MEMO1 family.

The polypeptide is MEMO1 family protein MMP1387 (Methanococcus maripaludis (strain DSM 14266 / JCM 13030 / NBRC 101832 / S2 / LL)).